An 81-amino-acid polypeptide reads, in one-letter code: U6-theraphotoxin-Hs1a (81 aa).

Positions 1 to 21 are cleaved as a signal peptide; that stretch reads MKASMFLALAGLVLLFVVCYA. Positions 22–48 are excised as a propeptide; the sequence is SESEEKEFPRELLSTIFAVDDFKGEER. 2 disulfides stabilise this stretch: cysteine 50–cysteine 65 and cysteine 57–cysteine 70.

Belongs to the neurotoxin 10 (Hwtx-1) family. 51 (Hntx-8) subfamily. Expressed by the venom gland.

It localises to the secreted. Functionally, binds to the nicotinic acetylcholine receptor. Blocks neuromuscular transmission. This chain is U6-theraphotoxin-Hs1a, found in Cyriopagopus schmidti (Chinese bird spider).